We begin with the raw amino-acid sequence, 501 residues long: Cobyric acid synthase (501 aa).

Residues 252–443 (DLDVAVIDLD…LHGIFDNPYW (192 aa)) form the GATase cobBQ-type domain. Cysteine 333 serves as the catalytic Nucleophile. Histidine 435 is a catalytic residue.

The protein belongs to the CobB/CobQ family. CobQ subfamily.

Its pathway is cofactor biosynthesis; adenosylcobalamin biosynthesis. Catalyzes amidations at positions B, D, E, and G on adenosylcobyrinic A,C-diamide. NH(2) groups are provided by glutamine, and one molecule of ATP is hydrogenolyzed for each amidation. This Limosilactobacillus reuteri (strain DSM 20016) (Lactobacillus reuteri) protein is Cobyric acid synthase.